The primary structure comprises 297 residues: Phosphatidylserine decarboxylase proenzyme (297 aa).

Catalysis depends on charge relay system; for autoendoproteolytic cleavage activity residues aspartate 100, histidine 157, and serine 263. The active-site Schiff-base intermediate with substrate; via pyruvic acid; for decarboxylase activity is serine 263. Serine 263 is modified (pyruvic acid (Ser); by autocatalysis).

Belongs to the phosphatidylserine decarboxylase family. PSD-B subfamily. Prokaryotic type I sub-subfamily. In terms of assembly, heterodimer of a large membrane-associated beta subunit and a small pyruvoyl-containing alpha subunit. Pyruvate serves as cofactor. Is synthesized initially as an inactive proenzyme. Formation of the active enzyme involves a self-maturation process in which the active site pyruvoyl group is generated from an internal serine residue via an autocatalytic post-translational modification. Two non-identical subunits are generated from the proenzyme in this reaction, and the pyruvate is formed at the N-terminus of the alpha chain, which is derived from the carboxyl end of the proenzyme. The autoendoproteolytic cleavage occurs by a canonical serine protease mechanism, in which the side chain hydroxyl group of the serine supplies its oxygen atom to form the C-terminus of the beta chain, while the remainder of the serine residue undergoes an oxidative deamination to produce ammonia and the pyruvoyl prosthetic group on the alpha chain. During this reaction, the Ser that is part of the protease active site of the proenzyme becomes the pyruvoyl prosthetic group, which constitutes an essential element of the active site of the mature decarboxylase.

It is found in the cell membrane. The enzyme catalyses a 1,2-diacyl-sn-glycero-3-phospho-L-serine + H(+) = a 1,2-diacyl-sn-glycero-3-phosphoethanolamine + CO2. It participates in phospholipid metabolism; phosphatidylethanolamine biosynthesis; phosphatidylethanolamine from CDP-diacylglycerol: step 2/2. Functionally, catalyzes the formation of phosphatidylethanolamine (PtdEtn) from phosphatidylserine (PtdSer). This chain is Phosphatidylserine decarboxylase proenzyme, found in Haemophilus ducreyi (strain 35000HP / ATCC 700724).